A 461-amino-acid polypeptide reads, in one-letter code: tRNA modification GTPase MnmE (461 aa).

Positions 22, 87, and 126 each coordinate (6S)-5-formyl-5,6,7,8-tetrahydrofolate. Residues Gly222 to Val382 enclose the TrmE-type G domain. Asn232 is a binding site for K(+). Residues Asn232–Ser237, Thr251–Thr257, and Asp276–Gly279 contribute to the GTP site. Ser236 is a Mg(2+) binding site. Residues Thr251, Ile253, and Thr256 each coordinate K(+). Thr257 serves as a coordination point for Mg(2+). (6S)-5-formyl-5,6,7,8-tetrahydrofolate is bound at residue Lys461.

It belongs to the TRAFAC class TrmE-Era-EngA-EngB-Septin-like GTPase superfamily. TrmE GTPase family. Homodimer. Heterotetramer of two MnmE and two MnmG subunits. The cofactor is K(+).

The protein localises to the cytoplasm. In terms of biological role, exhibits a very high intrinsic GTPase hydrolysis rate. Involved in the addition of a carboxymethylaminomethyl (cmnm) group at the wobble position (U34) of certain tRNAs, forming tRNA-cmnm(5)s(2)U34. The chain is tRNA modification GTPase MnmE from Desulforamulus reducens (strain ATCC BAA-1160 / DSM 100696 / MI-1) (Desulfotomaculum reducens).